Consider the following 181-residue polypeptide: Lysozyme C (181 aa).

The signal sequence occupies residues Met-1–Gly-19. Residues Leu-139–Glu-181 constitute a propeptide that is removed on maturation.

This sequence belongs to the dictyostelium lysozyme family. Post-translationally, contains six disulfide bonds.

The protein localises to the cytoplasmic vesicle lumen. It carries out the reaction Hydrolysis of (1-&gt;4)-beta-linkages between N-acetylmuramic acid and N-acetyl-D-glucosamine residues in a peptidoglycan and between N-acetyl-D-glucosamine residues in chitodextrins.. Has antibacterial activity. This chain is Lysozyme C (alyC), found in Dictyostelium discoideum (Social amoeba).